Consider the following 312-residue polypeptide: Olfactory receptor 6Z7 (312 aa).

The Extracellular segment spans residues 1–29 (MERSLALANMTRVQQFILLGLSTRLDIRD). A glycan (N-linked (GlcNAc...) asparagine) is linked at Asn-9. The chain crosses the membrane as a helical span at residues 30 to 50 (ALFAVFLTLYLLTLLENTLII). At 51–69 (YLICSHKELHKPMYFFLGN) the chain is on the cytoplasmic side. A helical membrane pass occupies residues 70 to 90 (LSCLEMCYVSVTMPTLLMGLW). A topological domain (extracellular) is located at residue Asn-91. A helical membrane pass occupies residues 92–112 (GLYHIPFIACMTQLFFFIVLV). Cys-101 and Cys-193 are disulfide-bonded. Topologically, residues 113 to 141 (GTECILLASMAYDRYVAICRPLHYPVLMR) are cytoplasmic. A helical transmembrane segment spans residues 142–162 (PQVCLGLAMISWLGGLLVSMI). Over 163 to 195 (KTTCIATLSYCGPNVLNHFFCDVSPLLNLSCTH) the chain is Extracellular. An N-linked (GlcNAc...) asparagine glycan is attached at Asn-190. Residues 196 to 216 (VALTELVDFISAIVILWGCFL) traverse the membrane as a helical segment. Over 217–241 (TTMASYVAIGRAVLRMPSTTARYKA) the chain is Cytoplasmic. Residues 242 to 262 (FSTCASHLVVVGIFYSVTIFI) traverse the membrane as a helical segment. The Extracellular portion of the chain corresponds to 263-275 (YARPKRIEAMDLN). A helical membrane pass occupies residues 276 to 296 (KVLSVIYTVVTPMCNPVIYCL). Over 297-312 (RNKEVQVALHRTMHWS) the chain is Cytoplasmic.

This sequence belongs to the G-protein coupled receptor 1 family.

The protein resides in the cell membrane. In terms of biological role, odorant receptor. The sequence is that of Olfactory receptor 6Z7 from Mus musculus (Mouse).